A 90-amino-acid polypeptide reads, in one-letter code: Small ribosomal subunit protein uS15c (90 aa).

This sequence belongs to the universal ribosomal protein uS15 family. Part of the 30S ribosomal subunit.

The protein localises to the plastid. Its subcellular location is the chloroplast. The polypeptide is Small ribosomal subunit protein uS15c (rps15) (Phaseolus vulgaris (Kidney bean)).